A 76-amino-acid polypeptide reads, in one-letter code: uncharacterized protein (76 aa).

A signal peptide spans 1-15 (MYLPLLLFCVISCYG).

This is an uncharacterized protein from Magallana gigas (Pacific oyster).